Here is a 220-residue protein sequence, read N- to C-terminus: Ribose-5-phosphate isomerase A (220 aa).

Substrate-binding positions include 28-31 (TGST), 81-84 (DGAD), and 94-97 (KGGG). Glu-103 (proton acceptor) is an active-site residue. Lys-121 is a substrate binding site.

The protein belongs to the ribose 5-phosphate isomerase family. As to quaternary structure, homodimer.

It catalyses the reaction aldehydo-D-ribose 5-phosphate = D-ribulose 5-phosphate. It functions in the pathway carbohydrate degradation; pentose phosphate pathway; D-ribose 5-phosphate from D-ribulose 5-phosphate (non-oxidative stage): step 1/1. Catalyzes the reversible conversion of ribose-5-phosphate to ribulose 5-phosphate. This Shewanella sp. (strain W3-18-1) protein is Ribose-5-phosphate isomerase A.